The following is a 171-amino-acid chain: Lipoprotein signal peptidase (171 aa).

The next 3 membrane-spanning stretches (helical) occupy residues 12 to 32, 67 to 87, and 93 to 113; these read WYWV…WVLA, WQRW…TVWL, and SLLK…GNLV. Residues aspartate 123 and aspartate 141 contribute to the active site. Residues 137 to 157 form a helical membrane-spanning segment; it reads FNIADSAICIGAVLIIWDAFL.

This sequence belongs to the peptidase A8 family.

The protein localises to the cell inner membrane. The catalysed reaction is Release of signal peptides from bacterial membrane prolipoproteins. Hydrolyzes -Xaa-Yaa-Zaa-|-(S,diacylglyceryl)Cys-, in which Xaa is hydrophobic (preferably Leu), and Yaa (Ala or Ser) and Zaa (Gly or Ala) have small, neutral side chains.. Its pathway is protein modification; lipoprotein biosynthesis (signal peptide cleavage). Functionally, this protein specifically catalyzes the removal of signal peptides from prolipoproteins. The polypeptide is Lipoprotein signal peptidase (Shewanella baltica (strain OS223)).